The primary structure comprises 604 residues: Aspartate--tRNA(Asp/Asn) ligase (604 aa).

Glu175 is a binding site for L-aspartate. The tract at residues 199–202 is aspartate; sequence QQFK. L-aspartate-binding residues include Arg221 and His456. Residue 221–223 participates in ATP binding; sequence RDE. ATP is bound at residue Glu496. An L-aspartate-binding site is contributed by Arg503. 548–551 is an ATP binding site; sequence GVDR.

It belongs to the class-II aminoacyl-tRNA synthetase family. Type 1 subfamily. In terms of assembly, homodimer.

It is found in the cytoplasm. It carries out the reaction tRNA(Asx) + L-aspartate + ATP = L-aspartyl-tRNA(Asx) + AMP + diphosphate. Its function is as follows. Aspartyl-tRNA synthetase with relaxed tRNA specificity since it is able to aspartylate not only its cognate tRNA(Asp) but also tRNA(Asn). Reaction proceeds in two steps: L-aspartate is first activated by ATP to form Asp-AMP and then transferred to the acceptor end of tRNA(Asp/Asn). In Methylorubrum populi (strain ATCC BAA-705 / NCIMB 13946 / BJ001) (Methylobacterium populi), this protein is Aspartate--tRNA(Asp/Asn) ligase.